Reading from the N-terminus, the 286-residue chain is Oxidoreductase clz15 (286 aa).

Belongs to the asaB hydroxylase/desaturase family.

The protein operates within secondary metabolite biosynthesis. Oxidoreductase; part of the gene cluster that mediates the biosynthesis of squalestatin S1 (SQS1, also known as zaragozic acid A), a heavily oxidized fungal polyketide that offers potent cholesterol lowering activity by targeting squalene synthase (SS). SQS1 is composed of a 2,8-dioxobicyclic[3.2.1]octane-3,4,5-tricarboxyclic acid core that is connected to two lipophilic polyketide arms. These initial steps feature the priming of an unusual benzoic acid starter unit onto the highly reducing polyketide synthase clz14, followed by oxaloacetate extension and product release to generate a tricarboxylic acid containing product. The phenylalanine ammonia lyase (PAL) clz10 and the acyl-CoA ligase clz12 are involved in transforming phenylalanine into benzoyl-CoA. The citrate synthase-like protein clz17 is involved in connecting the C-alpha-carbons of the hexaketide chain and oxaloacetate to afford the tricarboxylic acid unit. The potential hydrolytic enzymes, clz11 and clz13, are in close proximity to pks2 and may participate in product release. On the other side, the tetraketide arm is synthesized by a the squalestatin tetraketide synthase clz2 and enzymatically esterified to the core in the last biosynthetic step, by the acetyltransferase clz6. The biosynthesis of the tetraketide must involve 3 rounds of chain extension. After the first and second rounds methyl-transfer occurs, and in all rounds of extension the ketoreductase and dehydratase are active. The enoyl reductase and C-MeT of clz2 are not active in the final round of extension. The acetyltransferase clz6 appears to have a broad substrate selectivity for its acyl CoA substrate, allowing the in vitro synthesis of novel squalestatins. The biosynthesis of SQS1 requires several oxidative steps likely performed by oxidoreductases clz3, clz15 and clz16. Finally, in support of the identification of the cluster as being responsible for SQS1 production, the cluster contains a gene encoding a putative squalene synthase (SS) clz20, suggesting a likely mechanism for self-resistance. This is Oxidoreductase clz15 from Cochliobolus lunatus (Filamentous fungus).